Reading from the N-terminus, the 63-residue chain is uncharacterized protein (63 aa).

This is an uncharacterized protein from Rickettsia conorii (strain ATCC VR-613 / Malish 7).